Consider the following 1433-residue polypeptide: Probable serine/threonine-protein kinase DDB_G0277989 (1433 aa).

ATP is bound by residues 1–4 (MNEI) and Lys41. Positions 1-272 (MNEIIVGEYK…EFDDFTHPLS (272 aa)) constitute a Protein kinase 1 domain. The Proton acceptor role is filled by Asp151. 2 stretches are compositionally biased toward low complexity: residues 332 to 362 (NNNN…NNNN) and 533 to 550 (TATT…TTTA). Disordered regions lie at residues 332–366 (NNNN…SDGP) and 521–550 (PSSE…TTTA). The Protein kinase 2 domain maps to 1177–1433 (IYDKRYYIQK…QPHVCKSFKK (257 aa)).

This sequence belongs to the protein kinase superfamily. Ser/Thr protein kinase family.

The enzyme catalyses L-seryl-[protein] + ATP = O-phospho-L-seryl-[protein] + ADP + H(+). The catalysed reaction is L-threonyl-[protein] + ATP = O-phospho-L-threonyl-[protein] + ADP + H(+). This Dictyostelium discoideum (Social amoeba) protein is Probable serine/threonine-protein kinase DDB_G0277989.